Here is a 176-residue protein sequence, read N- to C-terminus: Oleosin Ara h 14.0103 (176 aa).

Residue alanine 2 is modified to N-acetylalanine; alternate. Transmembrane regions (helical) follow at residues 50–70, 75–95, and 96–116; these read IIAVLVGVPTGGTLLLLSGLS, IIGLAIATPVFIFFSPVIVPA, and VVTIGLAVTGILTAGACGLTG. The disordered stretch occupies residues 156–176; it reads KTKDAGQEIQTKAQDVKRSSS.

Belongs to the oleosin family. In terms of tissue distribution, expressed in seeds (at protein level).

It localises to the lipid droplet. The protein resides in the membrane. In terms of biological role, may have a structural role to stabilize the lipid body during desiccation of the seed by preventing coalescence of the oil. Probably interacts with both lipid and phospholipid moieties of lipid bodies. May also provide recognition signals for specific lipase anchorage in lipolysis during seedling growth. In Arachis hypogaea (Peanut), this protein is Oleosin Ara h 14.0103.